We begin with the raw amino-acid sequence, 379 residues long: CCN family member 1 (379 aa).

The first 24 residues, 1 to 24 (MSSSTIKTLAVAVTLLHLTRLALS), serve as a signal peptide directing secretion. Residues 25–94 (TCPAACHCPL…TALKGICRAQ (70 aa)) enclose the IGFBP N-terminal domain. Disulfide bonds link C26/C50, C30/C52, C32/C53, C39/C56, C64/C78, and C70/C91. The region spanning 98–164 (RPCEYNSRIY…GQCCEEWVCD (67 aa)) is the VWFC domain. S184 is modified (phosphoserine). The region spanning 226-271 (KCIVQTTSWSQCSKSCGTGISTRVTNDNSECRLVKETRICEVRPCG) is the TSP type-1 domain. Residues 277–313 (SLKKGKKCSKTKKSPEPVRFTYAGCSSVKKYRPKYCG) are heparin-binding. Intrachain disulfides connect C284–C321, C301–C335, C312–C351, C315–C353, and C320–C357. The 75-residue stretch at 284 to 358 (CSKTKKSPEP…QSCKCNYNCP (75 aa)) folds into the CTCK domain.

The protein belongs to the CCN family. Interaction with integrins is heparin- and cell-type-dependent and promotes cell adhesion.

The protein localises to the secreted. Functionally, promotes cell proliferation, chemotaxis, angiogenesis and cell adhesion. Appears to play a role in wound healing by up-regulating, in skin fibroblasts, the expression of a number of genes involved in angiogenesis, inflammation and matrix remodeling including VEGA-A, VEGA-C, MMP1, MMP3, TIMP1, uPA, PAI-1 and integrins alpha-3 and alpha-5. CCN1-mediated gene regulation is dependent on heparin-binding. Down-regulates the expression of alpha-1 and alpha-2 subunits of collagen type-1. Promotes cell adhesion and adhesive signaling through integrin alpha-6/beta-1, cell migration through integrin alpha-1/beta-5 and cell proliferation through integrin alpha-v/beta-3. In Rattus norvegicus (Rat), this protein is CCN family member 1.